A 247-amino-acid polypeptide reads, in one-letter code: Cytochrome c oxidase subunit 2 (247 aa).

Over 12–38 (DVPTPWGLYFQDSSTPNQEGIIELHDN) the chain is Mitochondrial intermembrane. A helical transmembrane segment spans residues 39–59 (IMFYLVLILCTVSWLLFSIVK). At 60-78 (DSSKNPLPHKYLVHGQTIE) the chain is on the mitochondrial matrix side. A helical membrane pass occupies residues 79–101 (IIWTILPAVVLLIIAFPSFILLY). Residues 102–247 (LCDEVISPAM…KEFLTWLNEQ (146 aa)) are Mitochondrial intermembrane-facing. Residues H182, C217, E219, C221, H225, and M228 each coordinate Cu cation. A Mg(2+)-binding site is contributed by E219.

This sequence belongs to the cytochrome c oxidase subunit 2 family. In terms of assembly, component of the cytochrome c oxidase (complex IV, CIV), a multisubunit enzyme composed of a catalytic core of 3 subunits and several supernumerary subunits. The complex exists as a monomer or a dimer and forms supercomplexes (SCs) in the inner mitochondrial membrane with ubiquinol-cytochrome c oxidoreductase (cytochrome b-c1 complex, complex III, CIII). Cu cation serves as cofactor. The signal sequence of COX2 is processed by IMP1.

The protein localises to the mitochondrion inner membrane. It carries out the reaction 4 Fe(II)-[cytochrome c] + O2 + 8 H(+)(in) = 4 Fe(III)-[cytochrome c] + 2 H2O + 4 H(+)(out). Its function is as follows. Component of the cytochrome c oxidase, the last enzyme in the mitochondrial electron transport chain which drives oxidative phosphorylation. The respiratory chain contains 3 multisubunit complexes succinate dehydrogenase (complex II, CII), ubiquinol-cytochrome c oxidoreductase (cytochrome b-c1 complex, complex III, CIII) and cytochrome c oxidase (complex IV, CIV), that cooperate to transfer electrons derived from NADH and succinate to molecular oxygen, creating an electrochemical gradient over the inner membrane that drives transmembrane transport and the ATP synthase. Cytochrome c oxidase is the component of the respiratory chain that catalyzes the reduction of oxygen to water. Electrons originating from reduced cytochrome c in the intermembrane space (IMS) are transferred via the dinuclear copper A center (CU(A)) of subunit 2 and heme A of subunit 1 to the active site in subunit 1, a binuclear center (BNC) formed by heme A3 and copper B (CU(B)). The BNC reduces molecular oxygen to 2 water molecules using 4 electrons from cytochrome c in the IMS and 4 protons from the mitochondrial matrix. This is Cytochrome c oxidase subunit 2 (COX2) from Cyberlindnera saturnus (Yeast).